The chain runs to 243 residues: NH(3)-dependent NAD(+) synthetase (243 aa).

An ATP-binding site is contributed by 31-38; that stretch reads GVSGGIDS. Asp37 provides a ligand contact to Mg(2+). Arg110 is a deamido-NAD(+) binding site. An ATP-binding site is contributed by Thr130. Mg(2+) is bound at residue Glu135. Lys143 and Asp150 together coordinate deamido-NAD(+). Positions 159 and 181 each coordinate ATP. Position 227–228 (227–228) interacts with deamido-NAD(+); that stretch reads HK.

This sequence belongs to the NAD synthetase family. Homodimer.

It carries out the reaction deamido-NAD(+) + NH4(+) + ATP = AMP + diphosphate + NAD(+) + H(+). The protein operates within cofactor biosynthesis; NAD(+) biosynthesis; NAD(+) from deamido-NAD(+) (ammonia route): step 1/1. Catalyzes the ATP-dependent amidation of deamido-NAD to form NAD. Uses ammonia as a nitrogen source. This is NH(3)-dependent NAD(+) synthetase from Malacoplasma penetrans (strain HF-2) (Mycoplasma penetrans).